The following is a 476-amino-acid chain: Monofunctional riboflavin biosynthesis protein RIBA 2, chloroplastic (476 aa).

Residues 1–54 (MASLTLRCDSTHLLPSRDVVKGTKPFGTSLVYPRIISKKFNVRMRVIPEEGDVF) constitute a chloroplast transit peptide. Residues 44–306 (MRVIPEEGDV…IADLIRYRRK (263 aa)) are DHBP synthase. Residues 130 to 131 (RE), Asp-135, 245 to 249 (RAGHT), and Glu-269 contribute to the D-ribulose 5-phosphate site. A Mg(2+)-binding site is contributed by Glu-131. His-248 serves as a coordination point for Mg(2+). The inactive GTP cyclohydrolase II stretch occupies residues 307–476 (RERLVEFTAV…SGKVPLITTP (170 aa)). GTP is bound by residues 357–361 (RVHAE), Gln-376, 399–401 (ESK), and Thr-450.

This sequence in the N-terminal section; belongs to the DHBP synthase family. In the C-terminal section; belongs to the GTP cyclohydrolase II family. The cofactor is Mg(2+). Mn(2+) serves as cofactor. Expressed in leaves, shoots, roots, flowers and siliques.

It is found in the plastid. It localises to the chloroplast. The catalysed reaction is D-ribulose 5-phosphate = (2S)-2-hydroxy-3-oxobutyl phosphate + formate + H(+). The protein operates within cofactor biosynthesis; riboflavin biosynthesis; 2-hydroxy-3-oxobutyl phosphate from D-ribulose 5-phosphate: step 1/1. Involved in riboflavin biosynthesis. Catalyzes the conversion of D-ribulose 5-phosphate to formate and 3,4-dihydroxy-2-butanone 4-phosphate. RIBA2 and RIBA3 together are not able to complement the loss of function of RIBA1. This is Monofunctional riboflavin biosynthesis protein RIBA 2, chloroplastic (RIBA2) from Arabidopsis thaliana (Mouse-ear cress).